The following is a 335-amino-acid chain: Phosphate acyltransferase (335 aa).

The protein belongs to the PlsX family. As to quaternary structure, homodimer. Probably interacts with PlsY.

The protein resides in the cytoplasm. The enzyme catalyses a fatty acyl-[ACP] + phosphate = an acyl phosphate + holo-[ACP]. Its pathway is lipid metabolism; phospholipid metabolism. Its function is as follows. Catalyzes the reversible formation of acyl-phosphate (acyl-PO(4)) from acyl-[acyl-carrier-protein] (acyl-ACP). This enzyme utilizes acyl-ACP as fatty acyl donor, but not acyl-CoA. The protein is Phosphate acyltransferase of Streptococcus pyogenes serotype M18 (strain MGAS8232).